Consider the following 134-residue polypeptide: UPF0102 protein Dvul_2148 (134 aa).

The protein belongs to the UPF0102 family.

In Nitratidesulfovibrio vulgaris (strain DP4) (Desulfovibrio vulgaris), this protein is UPF0102 protein Dvul_2148.